The chain runs to 345 residues: S-adenosylmethionine:tRNA ribosyltransferase-isomerase (345 aa).

Belongs to the QueA family. As to quaternary structure, monomer.

Its subcellular location is the cytoplasm. It catalyses the reaction 7-aminomethyl-7-carbaguanosine(34) in tRNA + S-adenosyl-L-methionine = epoxyqueuosine(34) in tRNA + adenine + L-methionine + 2 H(+). The protein operates within tRNA modification; tRNA-queuosine biosynthesis. In terms of biological role, transfers and isomerizes the ribose moiety from AdoMet to the 7-aminomethyl group of 7-deazaguanine (preQ1-tRNA) to give epoxyqueuosine (oQ-tRNA). The sequence is that of S-adenosylmethionine:tRNA ribosyltransferase-isomerase from Acidithiobacillus ferrooxidans (strain ATCC 53993 / BNL-5-31) (Leptospirillum ferrooxidans (ATCC 53993)).